Reading from the N-terminus, the 640-residue chain is uncharacterized protein (640 aa).

The region spanning 184–328 (VKRDTIFIIK…KVQRSIDTMI (145 aa)) is the TIR domain. The segment at 613–640 (LPNDLDDEDEELDDSTLGRPDSDEEGGE) is disordered. The segment covering 616–626 (DLDDEDEELDD) has biased composition (acidic residues).

This is an uncharacterized protein from Sinorhizobium fredii (strain NBRC 101917 / NGR234).